Consider the following 366-residue polypeptide: Holliday junction branch migration complex subunit RuvB (366 aa).

Positions 1–48 (MIDRLMAREAIYQQSNPDPGGDPPEDGPPHGKNAADGGDEPDRGPDPD) are disordered. The interval 21-212 (GDPPEDGPPH…FQIREHLGWY (192 aa)) is large ATPase domain (RuvB-L). ATP-binding positions include L51, R52, G93, K96, T97, T98, 159–161 (EDF), R202, Y212, and R249. A Mg(2+)-binding site is contributed by T97. Residues 213–283 (TRKELAEIVL…VCEAALDMIG (71 aa)) form a small ATPAse domain (RuvB-S) region. Positions 286 to 366 (HLGLDKQDRN…KRQMPDRPLS (81 aa)) are head domain (RuvB-H). Residues R341, R343, and R346 each coordinate DNA.

Belongs to the RuvB family. In terms of assembly, homohexamer. Forms an RuvA(8)-RuvB(12)-Holliday junction (HJ) complex. HJ DNA is sandwiched between 2 RuvA tetramers; dsDNA enters through RuvA and exits via RuvB. An RuvB hexamer assembles on each DNA strand where it exits the tetramer. Each RuvB hexamer is contacted by two RuvA subunits (via domain III) on 2 adjacent RuvB subunits; this complex drives branch migration. In the full resolvosome a probable DNA-RuvA(4)-RuvB(12)-RuvC(2) complex forms which resolves the HJ.

Its subcellular location is the cytoplasm. The catalysed reaction is ATP + H2O = ADP + phosphate + H(+). The RuvA-RuvB-RuvC complex processes Holliday junction (HJ) DNA during genetic recombination and DNA repair, while the RuvA-RuvB complex plays an important role in the rescue of blocked DNA replication forks via replication fork reversal (RFR). RuvA specifically binds to HJ cruciform DNA, conferring on it an open structure. The RuvB hexamer acts as an ATP-dependent pump, pulling dsDNA into and through the RuvAB complex. RuvB forms 2 homohexamers on either side of HJ DNA bound by 1 or 2 RuvA tetramers; 4 subunits per hexamer contact DNA at a time. Coordinated motions by a converter formed by DNA-disengaged RuvB subunits stimulates ATP hydrolysis and nucleotide exchange. Immobilization of the converter enables RuvB to convert the ATP-contained energy into a lever motion, pulling 2 nucleotides of DNA out of the RuvA tetramer per ATP hydrolyzed, thus driving DNA branch migration. The RuvB motors rotate together with the DNA substrate, which together with the progressing nucleotide cycle form the mechanistic basis for DNA recombination by continuous HJ branch migration. Branch migration allows RuvC to scan DNA until it finds its consensus sequence, where it cleaves and resolves cruciform DNA. This is Holliday junction branch migration complex subunit RuvB from Rhodopirellula baltica (strain DSM 10527 / NCIMB 13988 / SH1).